Reading from the N-terminus, the 389-residue chain is G2/M cell-cycle inhibitor DR6 (389 aa).

Belongs to the Roseolovirus DR6 family.

Its subcellular location is the host nucleus. Functionally, inhibits the host G2/M cell-cycle progression in a p53-independent manner. The chain is G2/M cell-cycle inhibitor DR6 (DR6L) from Homo sapiens (Human).